The sequence spans 84 residues: Sulfur carrier protein TusA (84 aa).

The active-site Cysteine persulfide intermediate is the cysteine 19.

The protein belongs to the sulfur carrier protein TusA family. In terms of assembly, interacts with IscS.

The protein resides in the cytoplasm. It participates in tRNA modification. Functionally, sulfur carrier protein involved in sulfur trafficking in the cell. Part of a sulfur-relay system required for 2-thiolation during synthesis of 2-thiouridine of the modified wobble base 5-methylaminomethyl-2-thiouridine (mnm(5)s(2)U) in tRNA. Interacts with IscS and stimulates its cysteine desulfurase activity. Accepts an activated sulfur from IscS, which is then transferred to TusD, and thus determines the direction of sulfur flow from IscS to 2-thiouridine formation. Also appears to be involved in sulfur transfer for the biosynthesis of molybdopterin. The protein is Sulfur carrier protein TusA of Sodalis glossinidius (strain morsitans).